We begin with the raw amino-acid sequence, 141 residues long: Large ribosomal subunit protein uL11 (141 aa).

The protein belongs to the universal ribosomal protein uL11 family. Part of the ribosomal stalk of the 50S ribosomal subunit. Interacts with L10 and the large rRNA to form the base of the stalk. L10 forms an elongated spine to which L12 dimers bind in a sequential fashion forming a multimeric L10(L12)X complex. In terms of processing, one or more lysine residues are methylated.

Functionally, forms part of the ribosomal stalk which helps the ribosome interact with GTP-bound translation factors. The sequence is that of Large ribosomal subunit protein uL11 from Methylacidiphilum infernorum (isolate V4) (Methylokorus infernorum (strain V4)).